A 513-amino-acid chain; its full sequence is ATP synthase subunit alpha 1 (513 aa).

169–176 is an ATP binding site; the sequence is GDRQTGKT.

The protein belongs to the ATPase alpha/beta chains family. As to quaternary structure, F-type ATPases have 2 components, CF(1) - the catalytic core - and CF(0) - the membrane proton channel. CF(1) has five subunits: alpha(3), beta(3), gamma(1), delta(1), epsilon(1). CF(0) has three main subunits: a(1), b(2) and c(9-12). The alpha and beta chains form an alternating ring which encloses part of the gamma chain. CF(1) is attached to CF(0) by a central stalk formed by the gamma and epsilon chains, while a peripheral stalk is formed by the delta and b chains.

The protein localises to the cell inner membrane. The enzyme catalyses ATP + H2O + 4 H(+)(in) = ADP + phosphate + 5 H(+)(out). Its function is as follows. Produces ATP from ADP in the presence of a proton gradient across the membrane. The alpha chain is a regulatory subunit. The chain is ATP synthase subunit alpha 1 from Nitrosomonas eutropha (strain DSM 101675 / C91 / Nm57).